We begin with the raw amino-acid sequence, 168 residues long: Endoribonuclease YbeY (168 aa).

3 residues coordinate Zn(2+): His-132, His-136, and His-142.

This sequence belongs to the endoribonuclease YbeY family. Zn(2+) serves as cofactor.

The protein localises to the cytoplasm. In terms of biological role, single strand-specific metallo-endoribonuclease involved in late-stage 70S ribosome quality control and in maturation of the 3' terminus of the 16S rRNA. The sequence is that of Endoribonuclease YbeY from Clostridium perfringens (strain ATCC 13124 / DSM 756 / JCM 1290 / NCIMB 6125 / NCTC 8237 / Type A).